A 117-amino-acid polypeptide reads, in one-letter code: Histone-like protein Hq1 (117 aa).

Composition is skewed to basic residues over residues 1–17 (MPAK…RSKA) and 39–50 (RKLRAAQKKLAK). The segment at 1–117 (MPAKKRKTTR…RGRGRPRKKA (117 aa)) is disordered. Residues 51–68 (AKKDASRKLAKLRKEAAR) are compositionally biased toward basic and acidic residues. The span at 71–117 (AAAKKTRAPSKKGRKKATRKKGGGRSRKTARKVSTMKRGRGRPRKKA) shows a compositional bias: basic residues.

Its function is as follows. Binds DNA in vitro. The protein is Histone-like protein Hq1 (hcbA) of Coxiella burnetii (strain RSA 493 / Nine Mile phase I).